The primary structure comprises 322 residues: Agmatinase (322 aa).

Residues His136, Asp160, His162, Asp164, Asp243, and Asp245 each coordinate Mn(2+).

This sequence belongs to the arginase family. Agmatinase subfamily. Mn(2+) is required as a cofactor.

It catalyses the reaction agmatine + H2O = urea + putrescine. Its pathway is amine and polyamine biosynthesis; putrescine biosynthesis via agmatine pathway; putrescine from agmatine: step 1/1. Catalyzes the formation of putrescine from agmatine. The chain is Agmatinase from Chromobacterium violaceum (strain ATCC 12472 / DSM 30191 / JCM 1249 / CCUG 213 / NBRC 12614 / NCIMB 9131 / NCTC 9757 / MK).